A 391-amino-acid chain; its full sequence is Origin recognition complex subunit 2 (391 aa).

A disordered region spans residues 1-43; sequence MEEYTDSGEDKNVYSDDDNDYFTASTQNNRTSKNTDSSPLDPK. The span at 22 to 38 shows a compositional bias: polar residues; that stretch reads FTASTQNNRTSKNTDSS.

The protein belongs to the ORC2 family. ORC is composed of six subunits.

The protein localises to the nucleus. Its function is as follows. Component of the origin recognition complex (ORC) that binds origins of replication. DNA-binding is ATP-dependent, however specific DNA sequences that define origins of replication have not been identified so far. ORC is required to assemble the pre-replication complex necessary to initiate DNA replication. The polypeptide is Origin recognition complex subunit 2 (orcB) (Dictyostelium discoideum (Social amoeba)).